We begin with the raw amino-acid sequence, 433 residues long: Ligand-dependent corepressor (433 aa).

The tract at residues 1–147 (MQRMIQQFAA…GTREGFGHST (147 aa)) is disordered. A compositionally biased stretch (polar residues) spans 13 to 34 (TSKTSSTQDPSQPNSTKNQSLP). A compositionally biased stretch (low complexity) spans 36–48 (ASPVTTSPTAATT). The residue at position 42 (Ser42) is a Phosphoserine. The Interaction with nuclear receptors motif lies at 53–57 (LSKLL). Position 63 is a phosphoserine (Ser63). Residues 88-110 (KKSPCASSTSLSHSPGCSSTQGN) are compositionally biased toward polar residues. Phosphoserine is present on Ser249. A Glycyl lysine isopeptide (Lys-Gly) (interchain with G-Cter in SUMO2) cross-link involves residue Lys254. Positions 299–348 (QNRKSMLDAGPDSWGSDAEQSTSGQPYPTSDQEGDPGSKQPRKKRGRYRQ) are disordered. Residues 316–329 (AEQSTSGQPYPTSD) are compositionally biased toward polar residues. The short motif at 339–345 (PRKKRGR) is the Nuclear localization signal element. Positions 340–392 (RKKRGRYRQYNSEILEEAISVVMSGKMSVSKAQSIYGIPHSTLEYKVKERLGT) constitute an HTH psq-type domain. A DNA-binding region (H-T-H motif) is located at residues 368 to 388 (VSKAQSIYGIPHSTLEYKVKE). The segment at 393–412 (LKNPPKKKMKLMRSEGPDVS) is disordered. Residue Lys414 forms a Glycyl lysine isopeptide (Lys-Gly) (interchain with G-Cter in SUMO2) linkage.

In terms of assembly, interacts with ESR1 and ESR2 in the presence of estradiol. Interacts with CTBP1, HDAC3 and HDAC6. Component of a large corepressor complex that contains about 20 proteins, including CTBP1, CTBP2, HDAC1 and HDAC2. As to expression, detected in heart and kidney.

The protein resides in the nucleus. Functionally, repressor of ligand-dependent transcription activation by various nuclear repressors. Repressor of ligand-dependent transcription activation by ESR1, ESR2, NR3C1, PGR, RARA, RARB, RARG, RXRA and VDR. May act as transcription activator that binds DNA elements with the sequence 5'-CCCTATCGATCGATCTCTACCT-3'. This Mus musculus (Mouse) protein is Ligand-dependent corepressor (Lcor).